A 542-amino-acid polypeptide reads, in one-letter code: MVADPPRGDSKGLAAAEPTANGGLALASIEDQGEAAGGCCGSRDRVRRCLRANLLVLLTVVAVVVGVALGLGVSGAGGALALGPERLSAFVFPGELLLRLLRMIILPLVVCSLIGGAASLDPGALGRLGAWALLFFLVTTLLASALGVALALALQPGAASAAINASVGAAGSAENAPKKEVLDSFLDLARNIFPSNLVSAAFRSYSTSYEERNITGTRVKVPVGQEVEGMNILGLVVFAIVFGVALRKLGPEGELLIRFFNSFNEATMVLVSWIMWYAPVGIMFLVAGKIVEMEDVGLLFARLGKYILCCLLGHAIHGLLVLPLIYFLFTRKNPYRFLWGIVTPLATAFGTSSSSATLPLMMKCVEENNGVAKHISRFILPIGATVNMDGAALFQCVAAVFIAQLSEQSLDFVKIITILVTATASSVGAAGIPAGGVLTLAIILEAVNLPVDHISLILAVDWLVDRSCTVLNVEGDALGAGLLQNYVDRTEVRSTEPELIQVKSELPLDPLPAPTEEGNPLLRHYRGPAGDATVASEKESVM.

An N-acetylmethionine modification is found at M1. The Cytoplasmic segment spans residues 1–52 (MVADPPRGDSKGLAAAEPTANGGLALASIEDQGEAAGGCCGSRDRVRRCLRA). The helical transmembrane segment at 53–82 (NLLVLLTVVAVVVGVALGLGVSGAGGALAL) threads the bilayer. The Extracellular portion of the chain corresponds to 83–95 (GPERLSAFVFPGE). Residues 96–117 (LLLRLLRMIILPLVVCSLIGGA) traverse the membrane as a helical segment. At 118–131 (ASLDPGALGRLGAW) the chain is on the cytoplasmic side. The chain crosses the membrane as a helical span at residues 132 to 154 (ALLFFLVTTLLASALGVALALAL). Residues 155-225 (QPGAASAAIN…GTRVKVPVGQ (71 aa)) lie on the Extracellular side of the membrane. 2 N-linked (GlcNAc...) asparagine glycosylation sites follow: N164 and N213. The chain crosses the membrane as a helical span at residues 226–249 (EVEGMNILGLVVFAIVFGVALRKL). The Cytoplasmic segment spans residues 250–258 (GPEGELLIR). A helical membrane pass occupies residues 259–286 (FFNSFNEATMVLVSWIMWYAPVGIMFLV). Residues 287-307 (AGKIVEMEDVGLLFARLGKYI) lie on the Extracellular side of the membrane. The chain crosses the membrane as a helical span at residues 308–329 (LCCLLGHAIHGLLVLPLIYFLF). Topologically, residues 330 to 334 (TRKNP) are cytoplasmic. The discontinuously helical intramembrane region spans 335–365 (YRFLWGIVTPLATAFGTSSSSATLPLMMKCV). Residues 366-374 (EENNGVAKH) are Cytoplasmic-facing. Residues 375-401 (ISRFILPIGATVNMDGAALFQCVAAVF) traverse the membrane as a helical segment. G383, T385, and N387 together coordinate Na(+). At 402–414 (IAQLSEQSLDFVK) the chain is on the extracellular side. The segment at residues 415-448 (IITILVTATASSVGAAGIPAGGVLTLAIILEAVN) is an intramembrane region (discontinuously helical). At 449–461 (LPVDHISLILAVD) the chain is on the extracellular side. A helical transmembrane segment spans residues 462–483 (WLVDRSCTVLNVEGDALGAGLL). The Na(+) site is built by N472 and D476. The Cytoplasmic portion of the chain corresponds to 484-542 (QNYVDRTEVRSTEPELIQVKSELPLDPLPAPTEEGNPLLRHYRGPAGDATVASEKESVM). S494 carries the phosphoserine modification. T495 is modified (phosphothreonine). Phosphoserine occurs at positions 504, 536, and 540. The interval 509–542 (DPLPAPTEEGNPLLRHYRGPAGDATVASEKESVM) is disordered.

The protein belongs to the dicarboxylate/amino acid:cation symporter (DAACS) (TC 2.A.23) family. SLC1A5 subfamily. In terms of assembly, homotrimer.

It is found in the cell membrane. The protein localises to the melanosome. It catalyses the reaction L-glutamine(out) + L-serine(in) + Na(+)(out) = L-glutamine(in) + L-serine(out) + Na(+)(in). The enzyme catalyses L-glutamine(in) + L-serine(out) + Na(+)(out) = L-glutamine(out) + L-serine(in) + Na(+)(in). It carries out the reaction L-threonine(in) + L-glutamine(out) + Na(+)(out) = L-threonine(out) + L-glutamine(in) + Na(+)(in). The catalysed reaction is L-threonine(out) + L-glutamine(in) + Na(+)(out) = L-threonine(in) + L-glutamine(out) + Na(+)(in). It catalyses the reaction L-asparagine(in) + L-glutamine(out) + Na(+)(out) = L-asparagine(out) + L-glutamine(in) + Na(+)(in). The enzyme catalyses L-asparagine(out) + L-glutamine(in) + Na(+)(out) = L-asparagine(in) + L-glutamine(out) + Na(+)(in). It carries out the reaction L-glutamine(in) + L-alanine(out) + Na(+)(out) = L-glutamine(out) + L-alanine(in) + Na(+)(in). The catalysed reaction is L-valine(out) + L-glutamine(in) + Na(+)(out) = L-valine(in) + L-glutamine(out) + Na(+)(in). It catalyses the reaction L-glutamine(in) + L-methionine(out) + Na(+)(out) = L-glutamine(out) + L-methionine(in) + Na(+)(in). The enzyme catalyses L-glutamine(in) + L-glutamate(out) + Na(+)(out) + H(+)(out) = L-glutamine(out) + L-glutamate(in) + Na(+)(in) + H(+)(in). It carries out the reaction D-serine(in) + L-glutamine(out) + Na(+)(out) = D-serine(out) + L-glutamine(in) + Na(+)(in). The catalysed reaction is D-serine(in) + L-alanine(out) + Na(+)(out) = D-serine(out) + L-alanine(in) + Na(+)(in). It catalyses the reaction nitrate(in) = nitrate(out). The enzyme catalyses iodide(out) = iodide(in). It carries out the reaction thiocyanate(in) = thiocyanate(out). In terms of biological role, sodium-coupled antiporter of neutral amino acids. In a tri-substrate transport cycle, exchanges neutral amino acids between the extracellular and intracellular compartments, coupled to the inward cotransport of at least one sodium ion. The preferred substrate is the essential amino acid L-glutamine, a precursor for biosynthesis of proteins, nucleotides and amine sugars as well as an alternative fuel for mitochondrial oxidative phosphorylation. Exchanges L-glutamine with other neutral amino acids such as L-serine, L-threonine and L-asparagine in a bidirectional way. Provides L-glutamine to proliferating stem and activated cells driving the metabolic switch toward cell differentiation. The transport cycle is usually pH-independent, with the exception of L-glutamate. Transports extracellular L-glutamate coupled to the cotransport of one proton and one sodium ion in exchange for intracellular L-glutamine counter-ion. May provide for L-glutamate uptake in glial cells regulating glutamine/glutamate cycle in the nervous system. Can transport D-amino acids. Mediates D-serine release from the retinal glia potentially affecting NMDA receptor function in retinal neurons. Displays sodium- and amino acid-dependent but uncoupled channel-like anion conductance with a preference SCN(-) &gt;&gt; NO3(-) &gt; I(-) &gt; Cl(-). Through binding of the fusogenic protein syncytin-1/ERVW-1 may mediate trophoblasts syncytialization, the spontaneous fusion of their plasma membranes, an essential process in placental development. In Macaca fascicularis (Crab-eating macaque), this protein is Neutral amino acid transporter B(0) (SLC1A5).